We begin with the raw amino-acid sequence, 206 residues long: tRNA (guanine-N(7)-)-methyltransferase (206 aa).

4 residues coordinate S-adenosyl-L-methionine: Glu37, Glu62, Asp89, and Asp112. Asp112 is a catalytic residue. Substrate contacts are provided by Lys116 and Asp148.

Belongs to the class I-like SAM-binding methyltransferase superfamily. TrmB family.

It carries out the reaction guanosine(46) in tRNA + S-adenosyl-L-methionine = N(7)-methylguanosine(46) in tRNA + S-adenosyl-L-homocysteine. It participates in tRNA modification; N(7)-methylguanine-tRNA biosynthesis. Its function is as follows. Catalyzes the formation of N(7)-methylguanine at position 46 (m7G46) in tRNA. This Myxococcus xanthus (strain DK1622) protein is tRNA (guanine-N(7)-)-methyltransferase.